The following is a 362-amino-acid chain: Isopentenyl-diphosphate delta-isomerase (362 aa).

5–6 contributes to the substrate binding site; it reads RK. Residues 63–65, Ser93, and Asn122 contribute to the FMN site; that span reads AMT. Residue Gln152 coordinates substrate. Glu153 contributes to the Mg(2+) binding site. Residues Lys184, Thr214, 259–261, and 280–281 contribute to the FMN site; these read GIR and AG.

Belongs to the IPP isomerase type 2 family. As to quaternary structure, homooctamer. Dimer of tetramers. It depends on FMN as a cofactor. NADPH serves as cofactor. Mg(2+) is required as a cofactor.

It is found in the cytoplasm. The enzyme catalyses isopentenyl diphosphate = dimethylallyl diphosphate. Its function is as follows. Involved in the biosynthesis of isoprenoids. Catalyzes the 1,3-allylic rearrangement of the homoallylic substrate isopentenyl (IPP) to its allylic isomer, dimethylallyl diphosphate (DMAPP). The protein is Isopentenyl-diphosphate delta-isomerase of Nocardia farcinica (strain IFM 10152).